Consider the following 84-residue polypeptide: Carboxysome shell vertex protein CsoS4B (84 aa).

The region spanning 1-77 (MQILQVKKQL…TDLTVGGIID (77 aa)) is the BMV domain.

This sequence belongs to the CcmL/EutN family. CsoS4 subfamily. As to quaternary structure, homopentamer.

The protein localises to the carboxysome. Functionally, probably forms vertices in the carboxysome, a polyhedral inclusion where RuBisCO (ribulose bisphosphate carboxylase, cbbL-cbbS) is sequestered. Has been modeled to induce curvature upon insertion into an otherwise flat hexagonal layer of major carboxysome subunits. The sequence is that of Carboxysome shell vertex protein CsoS4B from Hydrogenovibrio crunogenus (strain DSM 25203 / XCL-2) (Thiomicrospira crunogena).